The following is a 192-amino-acid chain: Sporulation initiation phosphotransferase B (192 aa).

Residue His-30 is modified to Phosphohistidine.

As to quaternary structure, homodimer. Dimerization is essential for activity as both monomers contribute to the formation of the active site. Phosphorylated by spo0F.

The protein resides in the cytoplasm. Its function is as follows. Key element in the phosphorelay regulating sporulation initiation. Acts on spo0A. Mediates reversible phosphoryl transfer from spo0F to spo0A. This Bacillus subtilis (strain 168) protein is Sporulation initiation phosphotransferase B (spo0B).